The chain runs to 278 residues: Envelope glycoprotein L (278 aa).

The signal sequence occupies residues 1 to 30; sequence MCRRPDCGFSFSPGPVILLWCCLLLPIVSS. One can recognise a gL betaherpesvirus-type domain in the interval 43–256; sequence VPAECPELTR…DKYYAGLPPE (214 aa). An intrachain disulfide couples Cys-154 to Cys-159.

It belongs to the herpesviridae glycoprotein L (gL) family. Betaherpesvirinae gL subfamily. As to quaternary structure, interacts with glycoprotein H (gH); this interaction is necessary for the correct processing and cell surface expression of gH. Forms the envelope pentamer complex (PC) composed of gH, gL, UL128, UL130, and UL131A. The pentamer interacts with host NRP2. Forms the envelope trimer complex composed of gH, gL, and gO. The trimer interacts with host PDGFRA.

The protein localises to the virion membrane. It is found in the host cell membrane. It localises to the host Golgi apparatus. The protein resides in the host trans-Golgi network. In terms of biological role, the heterodimer glycoprotein H-glycoprotein L is required for the fusion of viral and plasma membranes leading to virus entry into the host cell. Acts as a functional inhibitor of gH and maintains gH in an inhibited form. Upon binding to host integrins, gL dissociates from gH leading to activation of the viral fusion glycoproteins gB and gH. In human cytomegalovirus, forms two distincts complexes to mediate viral entry, a trimer and a pentamer at the surface of the virion envelope. The gH-gL-gO trimer is required for infection in fibroblasts by interacting with host PDGFRA. The gH-gL-UL128-UL130-UL131A pentamer is essential for viral entry in epithelial, endothelial and myeloid cells via interaction with host NRP2. The sequence is that of Envelope glycoprotein L from Human cytomegalovirus (strain PT) (HHV-5).